The chain runs to 298 residues: Bifunctional protein FolD (298 aa).

NADP(+)-binding positions include 165–167 (GRS), Ser190, and Ile231.

This sequence belongs to the tetrahydrofolate dehydrogenase/cyclohydrolase family. Homodimer.

The catalysed reaction is (6R)-5,10-methylene-5,6,7,8-tetrahydrofolate + NADP(+) = (6R)-5,10-methenyltetrahydrofolate + NADPH. It carries out the reaction (6R)-5,10-methenyltetrahydrofolate + H2O = (6R)-10-formyltetrahydrofolate + H(+). It participates in one-carbon metabolism; tetrahydrofolate interconversion. In terms of biological role, catalyzes the oxidation of 5,10-methylenetetrahydrofolate to 5,10-methenyltetrahydrofolate and then the hydrolysis of 5,10-methenyltetrahydrofolate to 10-formyltetrahydrofolate. This is Bifunctional protein FolD from Prochlorococcus marinus (strain MIT 9312).